Here is a 688-residue protein sequence, read N- to C-terminus: Amino-acid acetyltransferase, mitochondrial (688 aa).

A mitochondrion-targeting transit peptide spans 1-45; sequence MSSRALTWPRTAKSSLLKQQTSSFVGQPKLGTPNCRSFSSTADRP. Disordered regions lie at residues 1-59 and 96-119; these read MSSR…SKSY and LKAQ…TVTQ. Composition is skewed to polar residues over residues 12–25, 34–57, and 106–119; these read AKSS…SSFV, NCRS…SSSK, and TEPT…TVTQ. Residues 509–678 enclose the N-acetyltransferase domain; that stretch reads NRPRLSLDDP…YEQVCRSIQP (170 aa).

It belongs to the acetyltransferase family.

It localises to the mitochondrion. The catalysed reaction is L-glutamate + acetyl-CoA = N-acetyl-L-glutamate + CoA + H(+). It functions in the pathway amino-acid biosynthesis; L-arginine biosynthesis; N(2)-acetyl-L-ornithine from L-glutamate: step 1/4. In terms of biological role, N-acetylglutamate synthase involved in arginine biosynthesis. The sequence is that of Amino-acid acetyltransferase, mitochondrial (arg2) from Aspergillus flavus (strain ATCC 200026 / FGSC A1120 / IAM 13836 / NRRL 3357 / JCM 12722 / SRRC 167).